The chain runs to 294 residues: 33 kDa chaperonin (294 aa).

2 cysteine pairs are disulfide-bonded: Cys-236–Cys-238 and Cys-269–Cys-272.

This sequence belongs to the HSP33 family. Under oxidizing conditions two disulfide bonds are formed involving the reactive cysteines. Under reducing conditions zinc is bound to the reactive cysteines and the protein is inactive.

It localises to the cytoplasm. Redox regulated molecular chaperone. Protects both thermally unfolding and oxidatively damaged proteins from irreversible aggregation. Plays an important role in the bacterial defense system toward oxidative stress. This chain is 33 kDa chaperonin, found in Desulforamulus reducens (strain ATCC BAA-1160 / DSM 100696 / MI-1) (Desulfotomaculum reducens).